Consider the following 873-residue polypeptide: Paramyosin (873 aa).

Positions 1 to 25 (MSSRSSKYMYKSSGGAGDISIEYGT) are nonhelical region. Residues 26-852 (DLGALTRLED…IRAKHRSWVT (827 aa)) adopt a coiled-coil conformation. The interval 853–873 (TSQVPGGTRQVFVTEESSQNF) is nonhelical region.

Belongs to the paramyosin family. In terms of assembly, homodimer. Binds IgG and collagen. As to expression, expressed in all tissues except in saliva.

Its subcellular location is the cytoplasm. The protein resides in the myofibril. Paramyosin is a major structural component of many thick filaments isolated from invertebrate muscles. The sequence is that of Paramyosin (PRM) from Rhipicephalus microplus (Cattle tick).